The following is a 315-amino-acid chain: Olfactory receptor 10H5 (315 aa).

Residues 1–25 (MQGLNHTSVSEFILVGFSAFPHLQL) are Extracellular-facing. N-linked (GlcNAc...) asparagine glycosylation occurs at Asn-5. Residues 26–46 (MLFLLFLLMYLFTLLGNLLIM) form a helical membrane-spanning segment. Residues 47–54 (ATVWSERS) are Cytoplasmic-facing. The chain crosses the membrane as a helical span at residues 55–75 (LHMPMYLFLCALSITEILYTV). Over 76–99 (AIIPRMLADLLSTQRSIAFLACAS) the chain is Extracellular. A disulfide bridge links Cys-97 with Cys-189. Residues 100-120 (QMFFSFSFGFTHSFLLTVMGY) form a helical membrane-spanning segment. The Cytoplasmic segment spans residues 121-139 (DRYVAICHPLRYNVLMSLR). The chain crosses the membrane as a helical span at residues 140 to 160 (GCTCRVGCSWAGGLVMGMVVT). Residues 161 to 197 (SAIFHLAFCGHKEIHHFFCHVPPLLKLACGDDVLVVA) are Extracellular-facing. The helical transmembrane segment at 198 to 218 (KGVGLVCITALLGCFLLILLS) threads the bilayer. The Cytoplasmic segment spans residues 219–238 (YAFIVAAILKIPSAEGRNKA). The helical transmembrane segment at 239-259 (FSTCASHLTVVVVHYGFASVI) threads the bilayer. Over 260–272 (YLKPKGPQSPEGD) the chain is Extracellular. A helical membrane pass occupies residues 273–293 (TLMGITYTVLTPFLSPIIFSL). Residues 294–315 (RNKELKVAMKKTCFTKLFPQNC) lie on the Cytoplasmic side of the membrane.

The protein belongs to the G-protein coupled receptor 1 family.

The protein resides in the cell membrane. Functionally, odorant receptor. The protein is Olfactory receptor 10H5 (OR10H5) of Homo sapiens (Human).